The sequence spans 501 residues: Solute carrier family 2, facilitated glucose transporter member 5 (501 aa).

At methionine 1 the chain carries N-acetylmethionine. Over 1-18 the chain is Cytoplasmic; it reads MEQQDPIKKEGRLTPVLA. The chain crosses the membrane as a helical span at residues 19–39; it reads LATLIAAFGSSFQYGYNVAAV. Residue tyrosine 32 participates in D-fructose binding. The Extracellular portion of the chain corresponds to 40–68; the sequence is NSPAELMKAFYNETHYSRFSEYISEFSLT. N-linked (GlcNAc...) asparagine glycosylation occurs at asparagine 51. Residues 69 to 91 traverse the membrane as a helical segment; the sequence is LLWSISVSMFPFGGFVGSLMVGP. Residues 92–98 lie on the Cytoplasmic side of the membrane; the sequence is LVNRLGR. A helical membrane pass occupies residues 99–119; that stretch reads KGTLLFNNIFSIVPAILMGTS. The Extracellular segment spans residues 120–126; it reads KTARSYE. Residues 127–149 traverse the membrane as a helical segment; that stretch reads MIILSRLLVGICAGLSSNVVPMY. The Cytoplasmic portion of the chain corresponds to 150-161; sequence LGELSPKNLRGA. A helical membrane pass occupies residues 162–182; that stretch reads LGVVPQLFITVGILVAQIVGL. Residue glutamine 167 coordinates D-fructose. At 183–192 the chain is on the extracellular side; sequence RSLLATEEGW. Residues 193–213 traverse the membrane as a helical segment; it reads PILLGLTAIPAALQLLLLPFF. At 214-277 the chain is on the cytoplasmic side; the sequence is PESPRYLLIQ…MFRMRSLRWQ (64 aa). Residues 278–298 traverse the membrane as a helical segment; the sequence is VISIIILMGGQQLSGVNAIYY. D-fructose-binding positions include glutamine 288 and 296–298; that span reads IYY. The Extracellular segment spans residues 299 to 313; that stretch reads YADQIYLSAGVKDQD. The helical transmembrane segment at 314 to 334 threads the bilayer; sequence VQYVTVGTGAVNVLMTICAVF. At 335-342 the chain is on the cytoplasmic side; it reads VVEYLGRR. The chain crosses the membrane as a helical span at residues 343-363; that stretch reads ALLLLGFSVCFIACCVLTVAL. The Extracellular segment spans residues 364-371; sequence ALQDRVSW. Residues 372–394 form a helical membrane-spanning segment; sequence MPYISIVCVISYVIGHALGPSPI. Residue histidine 387 coordinates D-fructose. Residues 395–412 lie on the Cytoplasmic side of the membrane; it reads PALLITEVFLQSSRSAAY. A helical transmembrane segment spans residues 413-433; it reads MVGGTVHWLSNFAVGLVFPFI. D-fructose is bound at residue 419–420; it reads HW. Topologically, residues 434 to 439 are extracellular; it reads QVGLGA. Residues 440-460 form a helical membrane-spanning segment; that stretch reads YSFIIFAVICLLTTIYIFLIV. Residues 461 to 501 are Cytoplasmic-facing; sequence PETKGKTFVEINHIFTKMNKVSDVHPAKDELKDIPLSAVEL.

This sequence belongs to the major facilitator superfamily. Sugar transporter (TC 2.A.1.1) family. Glucose transporter subfamily.

The protein resides in the apical cell membrane. It is found in the cell membrane. Its subcellular location is the sarcolemma. It catalyses the reaction D-fructose(out) = D-fructose(in). Functionally, functions as a fructose transporter that has only low activity with other monosaccharides. Can mediate the uptake of deoxyglucose, but with low efficiency. Essential for fructose uptake in the small intestine. Plays a role in the regulation of salt uptake and blood pressure in response to dietary fructose. Required for the development of high blood pressure in response to high dietary fructose intake. The sequence is that of Solute carrier family 2, facilitated glucose transporter member 5 from Equus caballus (Horse).